A 253-amino-acid polypeptide reads, in one-letter code: CENP-A recruiting complex protein mis20 (253 aa).

Residues 113–136 (TGPTTSKNKHPSHSNTIRSPPYKV) form a disordered region.

As to quaternary structure, component of the CENP-A recruiting complex composed of at least mis16, mis19, mis19 and mis20.

Its subcellular location is the cytoplasm. The protein resides in the cytoskeleton. It is found in the microtubule organizing center. It localises to the spindle pole body. The protein localises to the chromosome. Its subcellular location is the centromere. Component of the CENP-A recruiting complex that ensures the integrity of mitotic spindles through maintenance of kinetochore factors mis6/CENP-I and cnp1/CENP-A. Seems dispensable for proper chromosome segregation. This Schizosaccharomyces pombe (strain 972 / ATCC 24843) (Fission yeast) protein is CENP-A recruiting complex protein mis20.